The following is a 299-amino-acid chain: Lipoyl synthase (299 aa).

Positions 34, 39, 45, 60, 64, 67, and 273 each coordinate [4Fe-4S] cluster. A Radical SAM core domain is found at 46–262; sequence WNKKHATVMI…KYVAYSKGFL (217 aa).

This sequence belongs to the radical SAM superfamily. Lipoyl synthase family. Requires [4Fe-4S] cluster as cofactor.

The protein resides in the cytoplasm. The enzyme catalyses [[Fe-S] cluster scaffold protein carrying a second [4Fe-4S](2+) cluster] + N(6)-octanoyl-L-lysyl-[protein] + 2 oxidized [2Fe-2S]-[ferredoxin] + 2 S-adenosyl-L-methionine + 4 H(+) = [[Fe-S] cluster scaffold protein] + N(6)-[(R)-dihydrolipoyl]-L-lysyl-[protein] + 4 Fe(3+) + 2 hydrogen sulfide + 2 5'-deoxyadenosine + 2 L-methionine + 2 reduced [2Fe-2S]-[ferredoxin]. Its pathway is protein modification; protein lipoylation via endogenous pathway; protein N(6)-(lipoyl)lysine from octanoyl-[acyl-carrier-protein]: step 2/2. Its function is as follows. Catalyzes the radical-mediated insertion of two sulfur atoms into the C-6 and C-8 positions of the octanoyl moiety bound to the lipoyl domains of lipoate-dependent enzymes, thereby converting the octanoylated domains into lipoylated derivatives. The polypeptide is Lipoyl synthase (Ehrlichia canis (strain Jake)).